The following is a 196-amino-acid chain: Heat shock protein beta-8 (196 aa).

Residues 1–34 (MADGQMPFPCHYTSRRRRDPFRDSPLSSRLLDDG) form a disordered region. The span at 23 to 34 (DSPLSSRLLDDG) shows a compositional bias: low complexity. 2 positions are modified to phosphoserine: Ser24 and Ser57. Thr63 bears the Phosphothreonine mark. Residues Arg71 and Arg78 each carry the asymmetric dimethylarginine modification. The region spanning 74 to 185 (TAMTRFGVPA…PFGESSFNNE (112 aa)) is the sHSP domain. Ser87 carries the phosphoserine modification. Residues 176–196 (PFGESSFNNELPQDGQEVTCT) are disordered. Polar residues predominate over residues 178–196 (GESSFNNELPQDGQEVTCT).

The protein belongs to the small heat shock protein (HSP20) family. Monomer. Forms a ternary complex with BAG3 and HSPA1A. Component of the chaperone-assisted selective autophagy (CASA) complex consisting of BAG3, HSPA8/HSC70, HSPB8 and STUB1/CHIP. Interacts with HSPB1. Interacts with DNAJB6. Interacts with BAG3. Phosphorylated.

It is found in the cytoplasm. It localises to the nucleus. Involved in the chaperone-assisted selective autophagy (CASA), a crucial process for protein quality control, particularly in mechanical strained cells and tissues such as muscle. Displays temperature-dependent chaperone activity. This Bos taurus (Bovine) protein is Heat shock protein beta-8 (HSPB8).